A 165-amino-acid chain; its full sequence is Protein C2-DOMAIN ABA-RELATED 8 (165 aa).

An N-acetylmethionine modification is found at methionine 1. The C2 domain occupies 1 to 106; that stretch reads MENLVGLLRI…QGTDIQELTN (106 aa). 7 residues coordinate Ca(2+): arginine 21, aspartate 22, aspartate 27, aspartate 73, lysine 74, aspartate 75, and aspartate 81.

Belongs to the plant CAR protein family. As to quaternary structure, binds to PYR/PYL/RCAR abscisic acid intracellular receptors in an ABA-independent manner, both at the plasma membrane and in the nucleus.

The protein localises to the cell membrane. It localises to the nucleus. Functionally, stimulates the GTPase/ATPase activities of Obg-like ATPases. Mediates the transient calcium-dependent interaction of PYR/PYL/RCAR abscisic acid (ABA) receptors with the plasma membrane and thus regulates ABA sensitivity. The sequence is that of Protein C2-DOMAIN ABA-RELATED 8 from Arabidopsis thaliana (Mouse-ear cress).